The chain runs to 1091 residues: Voltage-dependent calcium channel subunit alpha-2/delta-3 (1091 aa).

The first 28 residues, 1–28, serve as a signal peptide directing secretion; the sequence is MAGPGSPRRASRGASALLAAALLYAALG. Residues 29-1068 are Extracellular-facing; the sequence is DVVRSEQQIP…HPEENARECG (1040 aa). An N-linked (GlcNAc...) asparagine glycan is attached at asparagine 166. Positions 256–438 constitute a VWFA domain; sequence DVVILVDVSG…ENVMEYLHVL (183 aa). A divalent metal cation contacts are provided by aspartate 262, serine 264, and serine 266. The MIDAS-like motif signature appears at 262–266; it reads DVSGS. The N-linked (GlcNAc...) asparagine glycan is linked to asparagine 309. A disulfide bridge links cysteine 412 with cysteine 1055. Residues 452–549 form the Cache domain; that stretch reads WTEAYIDSTL…RLLYEEGKKR (98 aa). 3 N-linked (GlcNAc...) asparagine glycosylation sites follow: asparagine 553, asparagine 632, and asparagine 793. Residue tyrosine 924 is modified to Phosphotyrosine. The chain crosses the membrane as a helical span at residues 1069 to 1089; the sequence is GAPSLQAQTVLLLLPLLLMLF. The Cytoplasmic portion of the chain corresponds to 1090–1091; sequence SR.

It belongs to the calcium channel subunit alpha-2/delta family. Dimer formed of alpha-2-2 and delta-2 chains; disulfide-linked. Voltage-dependent calcium channels are multisubunit complexes, consisting of alpha-1 (CACNA1), alpha-2 (CACNA2D), beta (CACNB) and delta (CACNA2D) subunits in a 1:1:1:1 ratio. Post-translationally, N-glycosylated. In terms of processing, may be proteolytically processed into subunits alpha-2-3 and delta-3 that are disulfide-linked. It is however unclear whether such cleavage really takes place in vivo and has a functional role. As to expression, only detected in brain. Not present in lung, testis, aorta, spleen, jejunum, ventricular muscle and kidney (at protein level). According to PubMed:11687876, it is brain-specific, while according to PubMed:11245980, it is widely expressed.

The protein resides in the membrane. Functionally, the alpha-2/delta subunit of voltage-dependent calcium channels regulates calcium current density and activation/inactivation kinetics of the calcium channel. Acts as a regulatory subunit for P/Q-type calcium channel (CACNA1A), N-type (CACNA1B), L-type (CACNA1C OR CACNA1D) but not T-type (CACNA1G). This chain is Voltage-dependent calcium channel subunit alpha-2/delta-3 (CACNA2D3), found in Homo sapiens (Human).